The following is a 393-amino-acid chain: Acetate kinase (393 aa).

N7 is a Mg(2+) binding site. K14 contributes to the ATP binding site. Residue R87 coordinates substrate. Catalysis depends on D144, which acts as the Proton donor/acceptor. ATP-binding positions include 202-206 (HIGNG), 277-279 (DLR), and 326-330 (GVGEN). E380 contributes to the Mg(2+) binding site.

Belongs to the acetokinase family. Homodimer. Requires Mg(2+) as cofactor. Mn(2+) is required as a cofactor.

The protein resides in the cytoplasm. The catalysed reaction is acetate + ATP = acetyl phosphate + ADP. It participates in metabolic intermediate biosynthesis; acetyl-CoA biosynthesis; acetyl-CoA from acetate: step 1/2. Functionally, catalyzes the formation of acetyl phosphate from acetate and ATP. Can also catalyze the reverse reaction. The protein is Acetate kinase of Mycoplasmopsis pulmonis (strain UAB CTIP) (Mycoplasma pulmonis).